The primary structure comprises 360 residues: Nicotinate-nucleotide--dimethylbenzimidazole phosphoribosyltransferase (360 aa).

Glutamate 327 acts as the Proton acceptor in catalysis.

The protein belongs to the CobT family.

The enzyme catalyses 5,6-dimethylbenzimidazole + nicotinate beta-D-ribonucleotide = alpha-ribazole 5'-phosphate + nicotinate + H(+). It participates in nucleoside biosynthesis; alpha-ribazole biosynthesis; alpha-ribazole from 5,6-dimethylbenzimidazole: step 1/2. Functionally, catalyzes the synthesis of alpha-ribazole-5'-phosphate from nicotinate mononucleotide (NAMN) and 5,6-dimethylbenzimidazole (DMB). The polypeptide is Nicotinate-nucleotide--dimethylbenzimidazole phosphoribosyltransferase (Shewanella baltica (strain OS185)).